The primary structure comprises 253 residues: 5'-nucleotidase SurE (253 aa).

Positions 8, 9, 39, and 95 each coordinate a divalent metal cation.

It belongs to the SurE nucleotidase family. A divalent metal cation is required as a cofactor.

It localises to the cytoplasm. The enzyme catalyses a ribonucleoside 5'-phosphate + H2O = a ribonucleoside + phosphate. In terms of biological role, nucleotidase that shows phosphatase activity on nucleoside 5'-monophosphates. This chain is 5'-nucleotidase SurE, found in Clostridium beijerinckii (strain ATCC 51743 / NCIMB 8052) (Clostridium acetobutylicum).